The primary structure comprises 169 residues: Allophycocyanin subunit beta-18 (169 aa).

Asparagine 72 carries the N4-methylasparagine modification. Cysteine 82 is a (2R,3E)-phycocyanobilin binding site.

This sequence belongs to the phycobiliprotein family. Heterodimer of ApcE and this beta chain. Contains one covalently linked bilin chromophore.

Its subcellular location is the cellular thylakoid membrane. In terms of biological role, a variant beta-allophycocyanin (AP) which forms a complex with ApcE, a phycobilisome terminal emitter that influences energy transfer to photosystem II. The polypeptide is Allophycocyanin subunit beta-18 (apcF) (Synechocystis sp. (strain ATCC 27184 / PCC 6803 / Kazusa)).